The chain runs to 341 residues: Glyceraldehyde-3-phosphate dehydrogenase 2 (341 aa).

NAD(+)-binding positions include 12–13 (RI), Arg78, and Thr120. D-glyceraldehyde 3-phosphate contacts are provided by residues 152 to 154 (SCT) and Thr183. The Nucleophile role is filled by Cys153. Asn184 lines the NAD(+) pocket. Residues Arg198, 211 to 212 (TG), and Arg234 contribute to the D-glyceraldehyde 3-phosphate site. Residue Asn313 coordinates NAD(+).

This sequence belongs to the glyceraldehyde-3-phosphate dehydrogenase family. In terms of assembly, homotetramer.

The protein localises to the cytoplasm. The catalysed reaction is D-glyceraldehyde 3-phosphate + phosphate + NAD(+) = (2R)-3-phospho-glyceroyl phosphate + NADH + H(+). It functions in the pathway carbohydrate degradation; glycolysis; pyruvate from D-glyceraldehyde 3-phosphate: step 1/5. Catalyzes the oxidative phosphorylation of glyceraldehyde 3-phosphate (G3P) to 1,3-bisphosphoglycerate (BPG) using the cofactor NAD. The first reaction step involves the formation of a hemiacetal intermediate between G3P and a cysteine residue, and this hemiacetal intermediate is then oxidized to a thioester, with concomitant reduction of NAD to NADH. The reduced NADH is then exchanged with the second NAD, and the thioester is attacked by a nucleophilic inorganic phosphate to produce BPG. The protein is Glyceraldehyde-3-phosphate dehydrogenase 2 (gapA2) of Staphylococcus aureus (strain COL).